Consider the following 46-residue polypeptide: Large ribosomal subunit protein bL36 (46 aa).

Belongs to the bacterial ribosomal protein bL36 family.

In Photorhabdus laumondii subsp. laumondii (strain DSM 15139 / CIP 105565 / TT01) (Photorhabdus luminescens subsp. laumondii), this protein is Large ribosomal subunit protein bL36.